A 144-amino-acid chain; its full sequence is Peptidyl-Asp metalloendopeptidase (144 aa).

H64 contributes to the Zn(2+) binding site. E65 is an active-site residue. H68 contributes to the Zn(2+) binding site.

The protein belongs to the peptidase M72 family. Zn(2+) is required as a cofactor.

The enzyme catalyses Cleavage of Xaa-|-Asp, Xaa-|-Glu and Xaa-|-cysteic acid bonds.. In terms of biological role, metalloprotease, specifically cleaves on the N-terminal side of aspartyl, glutamyl and cysteic acid residues. The polypeptide is Peptidyl-Asp metalloendopeptidase (Pseudomonas fragi).